A 213-amino-acid polypeptide reads, in one-letter code: Pyridoxine/pyridoxamine 5'-phosphate oxidase (213 aa).

Residues R9–Y12 and K67 contribute to the substrate site. Residues R62–K67, F77–T78, R83, K84, and Q106 contribute to the FMN site. Substrate contacts are provided by Y124, R128, and S132. FMN contacts are provided by residues Q141–S142 and W186. Residue R192–H194 participates in substrate binding. R196 contacts FMN.

Belongs to the pyridoxamine 5'-phosphate oxidase family. As to quaternary structure, homodimer. The cofactor is FMN.

It carries out the reaction pyridoxamine 5'-phosphate + O2 + H2O = pyridoxal 5'-phosphate + H2O2 + NH4(+). It catalyses the reaction pyridoxine 5'-phosphate + O2 = pyridoxal 5'-phosphate + H2O2. It participates in cofactor metabolism; pyridoxal 5'-phosphate salvage; pyridoxal 5'-phosphate from pyridoxamine 5'-phosphate: step 1/1. The protein operates within cofactor metabolism; pyridoxal 5'-phosphate salvage; pyridoxal 5'-phosphate from pyridoxine 5'-phosphate: step 1/1. Functionally, catalyzes the oxidation of either pyridoxine 5'-phosphate (PNP) or pyridoxamine 5'-phosphate (PMP) into pyridoxal 5'-phosphate (PLP). This Cyanothece sp. (strain PCC 7425 / ATCC 29141) protein is Pyridoxine/pyridoxamine 5'-phosphate oxidase.